The following is a 318-amino-acid chain: Deoxyhypusine hydroxylase (318 aa).

2 HEAT-like PBS-type repeats span residues 70-96 (LKHE…VLEN) and 103-129 (VRHE…YFKE). Positions 72, 73, 105, 106, 231, 232, 264, and 265 each coordinate Fe cation. An HEAT-like PBS-type 3 repeat occupies 262–288 (VRHEAAEALGSIATDECLPVLQSFLND).

The protein belongs to the deoxyhypusine hydroxylase family. It depends on Fe(2+) as a cofactor.

It is found in the cytoplasm. It localises to the nucleus. The catalysed reaction is [eIF5A protein]-deoxyhypusine + AH2 + O2 = [eIF5A protein]-hypusine + A + H2O. It participates in protein modification; eIF5A hypusination. Its function is as follows. Catalyzes the hydroxylation of the N(6)-(4-aminobutyl)-L-lysine intermediate to form hypusine, an essential post-translational modification only found in mature eIF-5A factor. The chain is Deoxyhypusine hydroxylase from Candida albicans (strain SC5314 / ATCC MYA-2876) (Yeast).